A 368-amino-acid polypeptide reads, in one-letter code: 2-oxoglutarate-dependent dioxygenase frbJ (368 aa).

The 107-residue stretch at 171–277 (QQHKLKIVKY…RYSIPFFQGV (107 aa)) folds into the Fe2OG dioxygenase domain. Residues H198, D200, and H256 each contribute to the Fe cation site. R268 contributes to the 2-oxoglutarate binding site.

This sequence belongs to the iron/ascorbate-dependent oxidoreductase family.

It functions in the pathway antifungal biosynthesis. In terms of biological role, 2-oxoglutarate-dependent dioxygenase; part of the gene cluster that mediates the biosynthesis of the antifungal antibiotic FR901469, an inhibitor of beta-1,3-glucansynthase, exerting antifungal activity against the pathogenes Candida albicans and Aspergillus fumigatus. FR901469 is a cyclic depsipeptide containing 12 amino acid residues and a fatty acid chain. The NRPS frbI contains 12 modules responsible for the formation of the depsipeptide backbone which is denoted as Acyl-Thr-Ala-Tyr-Val-4OHPro-Thr-Thr-3OHPro-threo3OHGln-Gly-Thr-Orn-OH (C71H116N14O23). The PKS frbB is probably involved in the production of the hydrocarbon chain, and the acyl-CoA ligase frbC might be involved in the transport of the chain to the peptide ptoduct of frbI. Because FR901469 contains 3 hydroxylated amino acid residues, the 3 oxygenases frbA, frbH, and frbJ might be participating in amino acid hydroxylation. As no thioesterase domains were detected in frbI or frbB, the thioesterases frbD and frbE may instead release and cyclize the products of the NRPS and PKS, respectively. The polypeptide is 2-oxoglutarate-dependent dioxygenase frbJ (Dothideomycetidae sp. (strain 11243) (Fungal sp. (strain No.11243))).